The chain runs to 219 residues: Phosphate-specific transport system accessory protein PhoU homolog 1 (219 aa).

The protein belongs to the PhoU family. In terms of assembly, homodimer.

The protein resides in the cytoplasm. Its function is as follows. Plays a role in the regulation of phosphate uptake. This Methanothermobacter thermautotrophicus (strain ATCC 29096 / DSM 1053 / JCM 10044 / NBRC 100330 / Delta H) (Methanobacterium thermoautotrophicum) protein is Phosphate-specific transport system accessory protein PhoU homolog 1.